The chain runs to 515 residues: Protein translocase subunit SecD (515 aa).

The chain crosses the membrane as a helical span at residues 6 to 26; it reads LYSLIFIIILTAFAVWVDLPG. The tract at residues 141–186 is disordered; the sequence is AITNGNQNQNSTKNGTPTPGTTPTPESTPQANQTPVAANVTPTPED. The segment covering 150–169 has biased composition (low complexity); sequence NSTKNGTPTPGTTPTPESTP. Polar residues predominate over residues 170–186; it reads QANQTPVAANVTPTPED. 5 helical membrane passes run 322-342, 344-364, 367-387, 427-447, and 450-470; these read RSIRAGLIGIGAVALFMILYY, LPGFVSVVALAIYAAVVFALF, IPVTLTLAGIAGFILSVGMAV, ISTLITCAILIWFGSRFGASV, and GFAITLAIGVIVSMFTAIFVT.

The protein belongs to the SecD/SecF family. SecD subfamily. In terms of assembly, forms a complex with SecF. Part of the essential Sec protein translocation apparatus which comprises SecA, SecYEG and auxiliary proteins SecDF. Other proteins may also be involved.

It is found in the cell membrane. Part of the Sec protein translocase complex. Interacts with the SecYEG preprotein conducting channel. SecDF uses the proton motive force (PMF) to complete protein translocation after the ATP-dependent function of SecA. The protein is Protein translocase subunit SecD of Thermobaculum terrenum (strain ATCC BAA-798 / CCMEE 7001 / YNP1).